Here is a 122-residue protein sequence, read N- to C-terminus: Phospholipase A2 nigroviriditoxin basic subunit B (122 aa).

7 disulfides stabilise this stretch: cysteine 26–cysteine 115, cysteine 28–cysteine 44, cysteine 43–cysteine 95, cysteine 49–cysteine 122, cysteine 50–cysteine 88, cysteine 57–cysteine 81, and cysteine 75–cysteine 86. Tyrosine 27, glycine 29, and glycine 31 together coordinate Ca(2+). Histidine 47 is a catalytic residue. Aspartate 48 is a binding site for Ca(2+). Residue aspartate 89 is part of the active site.

This sequence belongs to the phospholipase A2 family. Group II subfamily. D49 sub-subfamily. In terms of assembly, nigroviriditoxin is a heterodimer of an acidic subunit A and a basic subunit B. Ca(2+) serves as cofactor. As to expression, expressed by the venom gland.

It is found in the secreted. It catalyses the reaction a 1,2-diacyl-sn-glycero-3-phosphocholine + H2O = a 1-acyl-sn-glycero-3-phosphocholine + a fatty acid + H(+). Functionally, heterodimer A-B: Nigroviriditoxin possesses phospholipase A2 (PLA2) activity. It consists of a non-covalent association of a basic PLA2 subunit B with a non-enzymatic subunit A. In terms of biological role, subunit B: Snake venom phospholipase A2 (PLA2) that induces myonecrosis in mice. PLA2 catalyzes the calcium-dependent hydrolysis of the 2-acyl groups in 3-sn-phosphoglycerides. The polypeptide is Phospholipase A2 nigroviriditoxin basic subunit B (Bothriechis nigroviridis (Black-speckled palm pit viper)).